The chain runs to 250 residues: 2-C-methyl-D-erythritol 4-phosphate cytidylyltransferase (250 aa).

This sequence belongs to the IspD/TarI cytidylyltransferase family. IspD subfamily.

The catalysed reaction is 2-C-methyl-D-erythritol 4-phosphate + CTP + H(+) = 4-CDP-2-C-methyl-D-erythritol + diphosphate. It participates in isoprenoid biosynthesis; isopentenyl diphosphate biosynthesis via DXP pathway; isopentenyl diphosphate from 1-deoxy-D-xylulose 5-phosphate: step 2/6. Its function is as follows. Catalyzes the formation of 4-diphosphocytidyl-2-C-methyl-D-erythritol from CTP and 2-C-methyl-D-erythritol 4-phosphate (MEP). The protein is 2-C-methyl-D-erythritol 4-phosphate cytidylyltransferase of Streptomyces avermitilis (strain ATCC 31267 / DSM 46492 / JCM 5070 / NBRC 14893 / NCIMB 12804 / NRRL 8165 / MA-4680).